Consider the following 108-residue polypeptide: Urease subunit beta (108 aa).

The protein belongs to the urease beta subunit family. Probable heterotrimer of UreA (gamma), UreB (beta) and UreC (alpha) subunits. Three heterotrimers associate to form the active enzyme. The trimeric urease interacts with an accessory complex composed of UreD, UreF and UreG, which is required for the assembly of the nickel containing metallocenter of UreC. The UreE protein may also play a direct role in nickel transfer to the urease apoprotein.

It localises to the cytoplasm. It carries out the reaction urea + 2 H2O + H(+) = hydrogencarbonate + 2 NH4(+). The protein operates within nitrogen metabolism; urea degradation; CO(2) and NH(3) from urea (urease route): step 1/1. In Proteus mirabilis (strain HI4320), this protein is Urease subunit beta.